The primary structure comprises 120 residues: NAD(P)H-quinone oxidoreductase subunit 3 (120 aa).

3 helical membrane-spanning segments follow: residues 6–26 (GYDAFLGFLLISAAVPILALV), 64–84 (MFALVFVIFDVETVFLYPWAV), and 89–109 (LGLLAFIEALIFIAILLVALA).

The protein belongs to the complex I subunit 3 family. In terms of assembly, NDH-1 can be composed of about 15 different subunits; different subcomplexes with different compositions have been identified which probably have different functions.

The protein resides in the cellular thylakoid membrane. The enzyme catalyses a plastoquinone + NADH + (n+1) H(+)(in) = a plastoquinol + NAD(+) + n H(+)(out). It catalyses the reaction a plastoquinone + NADPH + (n+1) H(+)(in) = a plastoquinol + NADP(+) + n H(+)(out). In terms of biological role, NDH-1 shuttles electrons from an unknown electron donor, via FMN and iron-sulfur (Fe-S) centers, to quinones in the respiratory and/or the photosynthetic chain. The immediate electron acceptor for the enzyme in this species is believed to be plastoquinone. Couples the redox reaction to proton translocation, and thus conserves the redox energy in a proton gradient. Cyanobacterial NDH-1 also plays a role in inorganic carbon-concentration. The sequence is that of NAD(P)H-quinone oxidoreductase subunit 3 from Prochlorococcus marinus (strain MIT 9313).